The chain runs to 427 residues: 5'-deoxyadenosine deaminase (427 aa).

Zn(2+) contacts are provided by His-62 and His-64. Positions 91 and 183 each coordinate substrate. Zn(2+) is bound at residue His-210. Residues Glu-213 and Asp-298 each coordinate substrate. Asp-298 lines the Zn(2+) pocket.

The protein belongs to the metallo-dependent hydrolases superfamily. MTA/SAH deaminase family. In terms of assembly, homotetramer. Requires Zn(2+) as cofactor.

The catalysed reaction is 5'-deoxyadenosine + H2O + H(+) = 5'-deoxyinosine + NH4(+). It catalyses the reaction S-adenosyl-L-homocysteine + H2O + H(+) = S-inosyl-L-homocysteine + NH4(+). The enzyme catalyses S-methyl-5'-thioadenosine + H2O + H(+) = S-methyl-5'-thioinosine + NH4(+). It carries out the reaction adenosine + H2O + H(+) = inosine + NH4(+). The protein operates within amino-acid biosynthesis; S-adenosyl-L-methionine biosynthesis. Catalyzes the deamination of three SAM-derived enzymatic products, namely 5'-deoxyadenosine, S-adenosyl-L-homocysteine, and 5'-methylthioadenosine, to produce the inosine analogs. Can also deaminate adenosine. The preferred substrate for this enzyme is 5'-deoxyadenosine, but all these substrates are efficiently deaminated. Likely functions in a S-adenosyl-L-methionine (SAM) recycling pathway from S-adenosyl-L-homocysteine (SAH) produced from SAM-dependent methylation reactions. May also be involved in the recycling of 5'-deoxyadenosine, whereupon the 5'-deoxyribose moiety of 5'-deoxyinosine is further metabolized to deoxyhexoses used for the biosynthesis of aromatic amino acids in methanogens. The protein is 5'-deoxyadenosine deaminase of Methanothermobacter thermautotrophicus (strain ATCC 29096 / DSM 1053 / JCM 10044 / NBRC 100330 / Delta H) (Methanobacterium thermoautotrophicum).